Here is a 601-residue protein sequence, read N- to C-terminus: ATP-dependent lipid A-core flippase (601 aa).

An ABC transmembrane type-1 domain is found at 28–328; the sequence is LLSVCGLIVY…LTRVNAEFQR (301 aa). 6 helical membrane passes run 32–52, 81–101, 160–180, 183–203, 267–287, and 296–316; these read CGLIVYGLVDAAFISFIGPFI, VLLMAPIVVILMFSLRGFANF, ALISIVRDGVTVIGMLGLMFY, WKLSLCILVIGPIMGLVITIV, AVSQPLIMVIGSFALAFVLYA, and DLTAGTFATILGAMMAMLQPI. Residues 360 to 597 enclose the ABC transporter domain; sequence LRFDNVSFSY…GGMYAKLYQM (238 aa). An ATP-binding site is contributed by 394 to 401; sequence GRSGSGKS.

Belongs to the ABC transporter superfamily. Lipid exporter (TC 3.A.1.106) family. In terms of assembly, homodimer.

The protein resides in the cell inner membrane. It catalyses the reaction ATP + H2O + lipid A-core oligosaccharideSide 1 = ADP + phosphate + lipid A-core oligosaccharideSide 2.. Its function is as follows. Involved in lipopolysaccharide (LPS) biosynthesis. Translocates lipid A-core from the inner to the outer leaflet of the inner membrane. Transmembrane domains (TMD) form a pore in the inner membrane and the ATP-binding domain (NBD) is responsible for energy generation. This is ATP-dependent lipid A-core flippase from Shewanella sp. (strain MR-4).